The following is a 324-amino-acid chain: Brorin (324 aa).

The signal sequence occupies residues 1–27 (MPSSSAMAVGALSSSLLVTCCLMVALC). The segment at 37-126 (AQAPEQPGQE…TPQGEPPAAA (90 aa)) is disordered. Basic and acidic residues-rich tracts occupy residues 44 to 56 (GQEK…RDSP) and 64 to 78 (RASR…DWKS). The span at 92–107 (KQKQAWAAQGGSAKAA) shows a compositional bias: low complexity. The Mediates cell adhesion signature appears at 114–116 (RGD). 2 VWFC domains span residues 152 to 211 (KGCV…PQCK) and 215 to 273 (NYCE…PICK).

Peripherally associated with AMPAR complex. AMPAR complex consists of an inner core made of 4 pore-forming GluA/GRIA proteins (GRIA1, GRIA2, GRIA3 and GRIA4) and 4 major auxiliary subunits arranged in a twofold symmetry. One of the two pairs of distinct binding sites is occupied either by CNIH2, CNIH3 or CACNG2, CACNG3. The other harbors CACNG2, CACNG3, CACNG4, CACNG8 or GSG1L. This inner core of AMPAR complex is complemented by outer core constituents binding directly to the GluA/GRIA proteins at sites distinct from the interaction sites of the inner core constituents. Outer core constituents include at least PRRT1, PRRT2, CKAMP44/SHISA9, FRRS1L and NRN1. The proteins of the inner and outer core serve as a platform for other, more peripherally associated AMPAR constituents, including VWC2. Alone or in combination, these auxiliary subunits control the gating and pharmacology of the AMPAR complex and profoundly impact their biogenesis and protein processing. As to expression, predominantly expressed in the brain (at protein level). It is expressed in the neurons but not the glial cells.

The protein resides in the secreted. The protein localises to the extracellular space. Its subcellular location is the extracellular matrix. It localises to the basement membrane. It is found in the synapse. BMP antagonist which may play a role in neural development. Promotes cell adhesion. The chain is Brorin (Vwc2) from Mus musculus (Mouse).